Consider the following 1434-residue polypeptide: Receptor-type tyrosine-protein phosphatase U (1434 aa).

A signal peptide spans Met-1 to Ala-17. Topologically, residues Leu-18 to Leu-748 are extracellular. The 163-residue stretch at Ala-25–Lys-187 folds into the MAM domain. A glycan (N-linked (GlcNAc...) asparagine) is linked at Asn-74. In terms of domain architecture, Ig-like C2-type spans Pro-189–Ser-274. An intrachain disulfide couples Cys-209 to Cys-263. 4 Fibronectin type-III domains span residues Pro-287–Pro-382, Ala-385–Asp-483, Val-484–Thr-590, and Pro-597–Lys-677. Asn-409 carries N-linked (GlcNAc...) asparagine glycosylation. A glycan (N-linked (GlcNAc...) asparagine) is linked at Asn-684. Residues Gly-749–Ile-769 traverse the membrane as a helical segment. The Cytoplasmic segment spans residues Arg-770 to Arg-1434. Positions Arg-824–Leu-839 are enriched in polar residues. The interval Arg-824–Gly-851 is disordered. Tyrosine-protein phosphatase domains lie at Lys-876–Ala-1132 and Leu-1164–Tyr-1427. Substrate-binding positions include Glu-1041, Cys-1073–Arg-1079, and Gln-1117. Cys-1073 serves as the catalytic Phosphocysteine intermediate. Cys-1368 acts as the Phosphocysteine intermediate in catalysis.

Belongs to the protein-tyrosine phosphatase family. Receptor class 2B subfamily.

The protein resides in the cell junction. Its subcellular location is the cell membrane. The catalysed reaction is O-phospho-L-tyrosyl-[protein] + H2O = L-tyrosyl-[protein] + phosphate. Functionally, tyrosine-protein phosphatase which dephosphorylates CTNNB1. May function in cell proliferation and migration and play a role in the maintenance of epithelial integrity. This is Receptor-type tyrosine-protein phosphatase U (PTPRU) from Gallus gallus (Chicken).